A 223-amino-acid chain; its full sequence is Thiamine-phosphate synthase (223 aa).

Residues 37-41 (QFREK) and D72 each bind 4-amino-2-methyl-5-(diphosphooxymethyl)pyrimidine. Residues D73 and D92 each coordinate Mg(2+). Position 110 (S110) interacts with 4-amino-2-methyl-5-(diphosphooxymethyl)pyrimidine. 136–138 (TQS) lines the 2-[(2R,5Z)-2-carboxy-4-methylthiazol-5(2H)-ylidene]ethyl phosphate pocket. Residue K139 participates in 4-amino-2-methyl-5-(diphosphooxymethyl)pyrimidine binding. 2-[(2R,5Z)-2-carboxy-4-methylthiazol-5(2H)-ylidene]ethyl phosphate is bound by residues G168 and 188 to 189 (IS).

The protein belongs to the thiamine-phosphate synthase family. Requires Mg(2+) as cofactor.

It catalyses the reaction 2-[(2R,5Z)-2-carboxy-4-methylthiazol-5(2H)-ylidene]ethyl phosphate + 4-amino-2-methyl-5-(diphosphooxymethyl)pyrimidine + 2 H(+) = thiamine phosphate + CO2 + diphosphate. The catalysed reaction is 2-(2-carboxy-4-methylthiazol-5-yl)ethyl phosphate + 4-amino-2-methyl-5-(diphosphooxymethyl)pyrimidine + 2 H(+) = thiamine phosphate + CO2 + diphosphate. The enzyme catalyses 4-methyl-5-(2-phosphooxyethyl)-thiazole + 4-amino-2-methyl-5-(diphosphooxymethyl)pyrimidine + H(+) = thiamine phosphate + diphosphate. It participates in cofactor biosynthesis; thiamine diphosphate biosynthesis; thiamine phosphate from 4-amino-2-methyl-5-diphosphomethylpyrimidine and 4-methyl-5-(2-phosphoethyl)-thiazole: step 1/1. Functionally, condenses 4-methyl-5-(beta-hydroxyethyl)thiazole monophosphate (THZ-P) and 2-methyl-4-amino-5-hydroxymethyl pyrimidine pyrophosphate (HMP-PP) to form thiamine monophosphate (TMP). The protein is Thiamine-phosphate synthase of Streptococcus agalactiae serotype Ia (strain ATCC 27591 / A909 / CDC SS700).